A 367-amino-acid polypeptide reads, in one-letter code: DNA replication and repair protein RecF (367 aa).

Gly30–Thr37 contributes to the ATP binding site.

Belongs to the RecF family.

It is found in the cytoplasm. The RecF protein is involved in DNA metabolism; it is required for DNA replication and normal SOS inducibility. RecF binds preferentially to single-stranded, linear DNA. It also seems to bind ATP. This Pseudomonas fluorescens (strain Pf0-1) protein is DNA replication and repair protein RecF.